Reading from the N-terminus, the 420-residue chain is UDP-glucuronic acid decarboxylase 1 (420 aa).

M1 carries the N-acetylmethionine modification. At 1 to 19 (MVSKGLLRLVSSVNRRKMK) the chain is on the cytoplasmic side. The chain crosses the membrane as a helical; Signal-anchor for type II membrane protein span at residues 20–40 (LLLGIALFAYAASVWGNFVNM). Residues 41–420 (RSIQENGELK…RVKKGRTRHS (380 aa)) lie on the Lumenal side of the membrane. A Phosphothreonine modification is found at T94. Residues G98, F99, V100, D119, N120, F122, T123, G124, D144, and V145 each contribute to the NAD(+) site. L149 and Y150 together coordinate UDP-alpha-D-glucuronate. Positions 159 and 161 each coordinate NAD(+). K177 is a binding site for UDP-alpha-D-glucuronate. T178 serves as a coordination point for NAD(+). UDP-alpha-D-glucuronate-binding residues include N185, G188, K191, and R192. 3 residues coordinate NAD(+): A200, Y231, and K235. The active-site Proton acceptor is Y231. Residues Y245, Q248, and E249 each contribute to the UDP-alpha-D-glucuronate site. The NAD(+) site is built by T261, H267, and R272. The N-linked (GlcNAc...) asparagine glycan is linked to N316.

Belongs to the NAD(P)-dependent epimerase/dehydratase family. UDP-glucuronic acid decarboxylase subfamily. As to quaternary structure, homodimer and homotetramer. Interacts with AKT1. It depends on NAD(+) as a cofactor. Ubiquitous. Detected in heart, brain, spleen, lung, testis, liver, skeletal muscle and kidney.

The protein resides in the golgi apparatus. The protein localises to the golgi stack membrane. It catalyses the reaction UDP-alpha-D-glucuronate + H(+) = UDP-alpha-D-xylose + CO2. It functions in the pathway nucleotide-sugar biosynthesis; UDP-alpha-D-xylose biosynthesis; UDP-alpha-D-xylose from UDP-alpha-D-glucuronate: step 1/1. Its function is as follows. Catalyzes the NAD-dependent decarboxylation of UDP-glucuronic acid to UDP-xylose. Necessary for the biosynthesis of the core tetrasaccharide in glycosaminoglycan biosynthesis. This Rattus norvegicus (Rat) protein is UDP-glucuronic acid decarboxylase 1.